Reading from the N-terminus, the 465-residue chain is Serine hydroxymethyltransferase (465 aa).

K241 bears the N6-(pyridoxal phosphate)lysine mark.

The protein belongs to the SHMT family. Homotetramer. Requires pyridoxal 5'-phosphate as cofactor. As to expression, highest expression in the ovary and testis. 6- to 7-fold lower expression in hemocyte, silk gland, midgut and fat body.

It carries out the reaction (6R)-5,10-methylene-5,6,7,8-tetrahydrofolate + glycine + H2O = (6S)-5,6,7,8-tetrahydrofolate + L-serine. It functions in the pathway one-carbon metabolism; tetrahydrofolate interconversion. Functionally, interconversion of serine and glycine. The chain is Serine hydroxymethyltransferase (692975) from Bombyx mori (Silk moth).